A 311-amino-acid chain; its full sequence is Pyrimidine-specific ribonucleoside hydrolase RihA (311 aa).

The active site involves His240.

This sequence belongs to the IUNH family. RihA subfamily.

Hydrolyzes with equal efficiency cytidine or uridine to ribose and cytosine or uracil, respectively. This is Pyrimidine-specific ribonucleoside hydrolase RihA from Escherichia coli O7:K1 (strain IAI39 / ExPEC).